Here is a 1368-residue protein sequence, read N- to C-terminus: DNA-directed RNA polymerase subunit beta (1368 aa).

This sequence belongs to the RNA polymerase beta chain family. The RNAP catalytic core consists of 2 alpha, 1 beta, 1 beta' and 1 omega subunit. When a sigma factor is associated with the core the holoenzyme is formed, which can initiate transcription.

It catalyses the reaction RNA(n) + a ribonucleoside 5'-triphosphate = RNA(n+1) + diphosphate. DNA-dependent RNA polymerase catalyzes the transcription of DNA into RNA using the four ribonucleoside triphosphates as substrates. This chain is DNA-directed RNA polymerase subunit beta, found in Burkholderia lata (strain ATCC 17760 / DSM 23089 / LMG 22485 / NCIMB 9086 / R18194 / 383).